Here is a 507-residue protein sequence, read N- to C-terminus: TOM1-like protein 2 (507 aa).

The VHS domain maps to 20 to 152 (ATDGSLQSED…ELKRKGVEFP (133 aa)). Ser160 bears the Phosphoserine mark. The segment at 162–210 (IHTPQRSVPEVDPAATMPRSQSQQRTSAGSYSSPPPAPYSAPQAPALSV) is disordered. At Thr164 the chain carries Phosphothreonine. One can recognise a GAT domain in the interval 219–307 (EQIARLRSEL…VFLRYERFER (89 aa)). A Clathrin-binding motif is present at residues 329–334 (NLIDLG). Residues 467-507 (RAKAAEMVPDLPSPPMEAPAPASNPSGRKKPERSEDALFAL) form a disordered region. Positions 498–507 (ERSEDALFAL) are enriched in basic and acidic residues.

This sequence belongs to the TOM1 family. As to quaternary structure, interacts with clathrin, SRC and TOLLIP. Interacts with MYO6. In terms of tissue distribution, ubiquitously expressed with higher expression in heart and skeletal muscle.

Functionally, acts as a MYO6/Myosin VI adapter protein that targets myosin VI to endocytic structures. May also play a role in recruiting clathrin to endosomes. May regulate growth factor-induced mitogenic signaling. This Homo sapiens (Human) protein is TOM1-like protein 2 (TOM1L2).